Reading from the N-terminus, the 537-residue chain is uncharacterized protein (537 aa).

Helical transmembrane passes span 52-72 (MALA…ALHI), 76-96 (VGLI…MLSI), 157-177 (GFFL…VSVF), 183-203 (ILAF…IIYA), 219-239 (MPLA…GVFF), 267-287 (FWRI…TVAW), 318-338 (FVNA…IYIG), 362-382 (GVPW…IMNY), 393-413 (IINL…FVHF), and 462-482 (FAAG…VIWL).

This sequence belongs to the amino acid-polyamine-organocation (APC) superfamily.

It is found in the membrane. This is an uncharacterized protein from Schizosaccharomyces pombe (strain 972 / ATCC 24843) (Fission yeast).